A 143-amino-acid chain; its full sequence is Large ribosomal subunit protein uL11 (143 aa).

Belongs to the universal ribosomal protein uL11 family. Part of the ribosomal stalk of the 50S ribosomal subunit. Interacts with L10 and the large rRNA to form the base of the stalk. L10 forms an elongated spine to which L12 dimers bind in a sequential fashion forming a multimeric L10(L12)X complex. One or more lysine residues are methylated.

In terms of biological role, forms part of the ribosomal stalk which helps the ribosome interact with GTP-bound translation factors. This chain is Large ribosomal subunit protein uL11, found in Methylococcus capsulatus (strain ATCC 33009 / NCIMB 11132 / Bath).